We begin with the raw amino-acid sequence, 433 residues long: Glycerol-3-phosphate dehydrogenase [NAD(+)] (433 aa).

NAD(+) contacts are provided by residues 17-22, F49, and F117; that span reads GSGNWG. Residue K140 participates in substrate binding. A173 is an NAD(+) binding site. The segment at 187-246 is disordered; sequence IAYDPPPIDSSRAATPRDRSPNYDSTSANKLPDLTVTSADSNGKDDRGRRTKAKLTPVPE. Over residues 208-227 the composition is skewed to polar residues; sequence NYDSTSANKLPDLTVTSADS. The Proton acceptor role is filled by K283. Positions 349 and 378 each coordinate NAD(+). Position 349-350 (349-350) interacts with substrate; it reads RN.

The protein belongs to the NAD-dependent glycerol-3-phosphate dehydrogenase family.

The catalysed reaction is sn-glycerol 3-phosphate + NAD(+) = dihydroxyacetone phosphate + NADH + H(+). This chain is Glycerol-3-phosphate dehydrogenase [NAD(+)], found in Pyricularia oryzae (strain Y34) (Rice blast fungus).